We begin with the raw amino-acid sequence, 84 residues long: MKLLYLFLAILLAIEEPVISGKHHILRCMGNSGICRASCKKNEQPYLYCRNYQHCCLQSYMRISISGEEENTDWSYEKQWPRLP.

The first 21 residues, 1 to 21 (MKLLYLFLAILLAIEEPVISG), serve as a signal peptide directing secretion. 3 disulfides stabilise this stretch: Cys-28–Cys-55, Cys-35–Cys-49, and Cys-39–Cys-56.

The protein belongs to the beta-defensin family.

It localises to the secreted. Its function is as follows. Has antibacterial activity. This is Beta-defensin 119 (DEFB119) from Hylobates lar (Lar gibbon).